Reading from the N-terminus, the 427-residue chain is Phosphoribosylamine--glycine ligase (427 aa).

Positions 109 to 313 constitute an ATP-grasp domain; the sequence is RNLMAEYKIE…LAEVVTGITE (205 aa). 136–191 contacts ATP; that stretch reads VRDHDGDLAVKPIGLTGGKGVRIMGEQVDRAGAIEYIREINGGVVLEERLTGEEFT. Mg(2+)-binding residues include Q271, E283, and N285. Q271, E283, and N285 together coordinate Mn(2+).

The protein belongs to the GARS family. The cofactor is Mg(2+). Mn(2+) serves as cofactor.

The enzyme catalyses 5-phospho-beta-D-ribosylamine + glycine + ATP = N(1)-(5-phospho-beta-D-ribosyl)glycinamide + ADP + phosphate + H(+). It participates in purine metabolism; IMP biosynthesis via de novo pathway; N(1)-(5-phospho-D-ribosyl)glycinamide from 5-phospho-alpha-D-ribose 1-diphosphate: step 2/2. This Methanoregula boonei (strain DSM 21154 / JCM 14090 / 6A8) protein is Phosphoribosylamine--glycine ligase.